The chain runs to 346 residues: MYRFTDFDVSNISIYLNHVLFYTTQQAGDLEHMETRNYSAMTEFFLVGLSQYPELQLFLFLLCLIMYMIILLGNSLLIIITILDSRLHTPMYFFLGNLSFLDICYTSSSIPPMLIIFMSERKSISFIGCALQMVVSLGLGSTECVLLAVMAYDHYVAICNPLRYSIIMNGVLYVQMAAWSWIIGCLTSLLQTVLTMMLPFCGNNVIDHITCEILALLKLVCSDITINVLIMTVTNIVSLVILLLLIFISYVFILSSILRINCAEGRKKAFSTCSAHSIVVILFYGSALFMYMKPKSKNTNTSDEIIGLSYGVVSPMLNPIIYSLRNKEVKEAVKKVLSRHLHLLKM.

Topologically, residues 1–57 are extracellular; that stretch reads MYRFTDFDVSNISIYLNHVLFYTTQQAGDLEHMETRNYSAMTEFFLVGLSQYPELQL. A glycan (N-linked (GlcNAc...) asparagine) is linked at asparagine 37. A helical membrane pass occupies residues 58–78; that stretch reads FLFLLCLIMYMIILLGNSLLI. The Cytoplasmic segment spans residues 79–86; that stretch reads IITILDSR. A helical membrane pass occupies residues 87–107; sequence LHTPMYFFLGNLSFLDICYTS. Over 108–131 the chain is Extracellular; the sequence is SSIPPMLIIFMSERKSISFIGCAL. The cysteines at positions 129 and 221 are disulfide-linked. Residues 132 to 152 traverse the membrane as a helical segment; sequence QMVVSLGLGSTECVLLAVMAY. At 153–171 the chain is on the cytoplasmic side; the sequence is DHYVAICNPLRYSIIMNGV. The chain crosses the membrane as a helical span at residues 172-192; that stretch reads LYVQMAAWSWIIGCLTSLLQT. Residues 193-229 are Extracellular-facing; that stretch reads VLTMMLPFCGNNVIDHITCEILALLKLVCSDITINVL. A helical membrane pass occupies residues 230 to 249; it reads IMTVTNIVSLVILLLLIFIS. Residues 250-269 lie on the Cytoplasmic side of the membrane; that stretch reads YVFILSSILRINCAEGRKKA. Residues 270 to 290 traverse the membrane as a helical segment; the sequence is FSTCSAHSIVVILFYGSALFM. The Extracellular portion of the chain corresponds to 291–303; the sequence is YMKPKSKNTNTSD. Asparagine 300 is a glycosylation site (N-linked (GlcNAc...) asparagine). The chain crosses the membrane as a helical span at residues 304–324; the sequence is EIIGLSYGVVSPMLNPIIYSL. The Cytoplasmic portion of the chain corresponds to 325–346; that stretch reads RNKEVKEAVKKVLSRHLHLLKM.

This sequence belongs to the G-protein coupled receptor 1 family.

It localises to the cell membrane. Its function is as follows. Odorant receptor. The sequence is that of Olfactory receptor 13D1 (OR13D1) from Homo sapiens (Human).